Here is a 357-residue protein sequence, read N- to C-terminus: UDP-N-acetylglucosamine--N-acetylmuramyl-(pentapeptide) pyrophosphoryl-undecaprenol N-acetylglucosamine transferase (357 aa).

UDP-N-acetyl-alpha-D-glucosamine contacts are provided by residues 15 to 17 (TGG), asparagine 123, arginine 164, serine 190, and glutamine 284.

It belongs to the glycosyltransferase 28 family. MurG subfamily.

It is found in the cell inner membrane. It carries out the reaction di-trans,octa-cis-undecaprenyl diphospho-N-acetyl-alpha-D-muramoyl-L-alanyl-D-glutamyl-meso-2,6-diaminopimeloyl-D-alanyl-D-alanine + UDP-N-acetyl-alpha-D-glucosamine = di-trans,octa-cis-undecaprenyl diphospho-[N-acetyl-alpha-D-glucosaminyl-(1-&gt;4)]-N-acetyl-alpha-D-muramoyl-L-alanyl-D-glutamyl-meso-2,6-diaminopimeloyl-D-alanyl-D-alanine + UDP + H(+). The protein operates within cell wall biogenesis; peptidoglycan biosynthesis. Cell wall formation. Catalyzes the transfer of a GlcNAc subunit on undecaprenyl-pyrophosphoryl-MurNAc-pentapeptide (lipid intermediate I) to form undecaprenyl-pyrophosphoryl-MurNAc-(pentapeptide)GlcNAc (lipid intermediate II). The sequence is that of UDP-N-acetylglucosamine--N-acetylmuramyl-(pentapeptide) pyrophosphoryl-undecaprenol N-acetylglucosamine transferase from Synechococcus elongatus (strain ATCC 33912 / PCC 7942 / FACHB-805) (Anacystis nidulans R2).